A 367-amino-acid chain; its full sequence is Peptide chain release factor 2 (367 aa).

Position 254 is an N5-methylglutamine (Q254).

It belongs to the prokaryotic/mitochondrial release factor family. In terms of processing, methylated by PrmC. Methylation increases the termination efficiency of RF2.

It localises to the cytoplasm. Its function is as follows. Peptide chain release factor 2 directs the termination of translation in response to the peptide chain termination codons UGA and UAA. The chain is Peptide chain release factor 2 from Neisseria gonorrhoeae (strain ATCC 700825 / FA 1090).